The sequence spans 173 residues: Crossover junction endodeoxyribonuclease RuvC (173 aa).

Active-site residues include Asp-8, Glu-68, and Asp-140. Positions 8, 68, and 140 each coordinate Mg(2+).

Belongs to the RuvC family. In terms of assembly, homodimer which binds Holliday junction (HJ) DNA. The HJ becomes 2-fold symmetrical on binding to RuvC with unstacked arms; it has a different conformation from HJ DNA in complex with RuvA. In the full resolvosome a probable DNA-RuvA(4)-RuvB(12)-RuvC(2) complex forms which resolves the HJ. The cofactor is Mg(2+).

Its subcellular location is the cytoplasm. It catalyses the reaction Endonucleolytic cleavage at a junction such as a reciprocal single-stranded crossover between two homologous DNA duplexes (Holliday junction).. The RuvA-RuvB-RuvC complex processes Holliday junction (HJ) DNA during genetic recombination and DNA repair. Endonuclease that resolves HJ intermediates. Cleaves cruciform DNA by making single-stranded nicks across the HJ at symmetrical positions within the homologous arms, yielding a 5'-phosphate and a 3'-hydroxyl group; requires a central core of homology in the junction. The consensus cleavage sequence is 5'-(A/T)TT(C/G)-3'. Cleavage occurs on the 3'-side of the TT dinucleotide at the point of strand exchange. HJ branch migration catalyzed by RuvA-RuvB allows RuvC to scan DNA until it finds its consensus sequence, where it cleaves and resolves the cruciform DNA. The chain is Crossover junction endodeoxyribonuclease RuvC from Saccharophagus degradans (strain 2-40 / ATCC 43961 / DSM 17024).